Reading from the N-terminus, the 474-residue chain is MISFCPDCGKSIQAAFKFCPYCGNSLPVEEHVGSQTFVNPHVSSFQGSKRGLNSSFETSPKKVKWSSTVTSPRLSLFSDGDSSESEDTLSSSERSKGSGSRPPTPKSSPQKTRKSPQVTRGSPQKTSCSPQKTRQSPQTLKRSRVTTSLEALPTGTVLTDKSGRQWKLKSFQTRDNQGILYEAAPTSTLTCDSGPQKQKFSLKLDAKDGRLFNEQNFFQRAAKPLQVNKWKKLYSTPLLAIPTCMGFGVHQDKYRFLVLPSLGRSLQSALDVSPKHVLSERSVLQVACRLLDALEFLHENEYVHGNVTAENIFVDPEDQSQVTLAGYGFAFRYCPSGKHVAYVEGSRSPHEGDLEFISMDLHKGCGPSRRSDLQSLGYCMLKWLYGFLPWTNCLPNTEDIMKQKQKFVDKPGPFVGPCGHWIRPSETLQKYLKVVMALTYEEKPPYAMLRNNLEALLQDLRVSPYDPIGLPMVP.

Residues 41 to 58 (HVSSFQGSKRGLNSSFET) show a composition bias toward polar residues. Residues 41-152 (HVSSFQGSKR…SRVTTSLEAL (112 aa)) are disordered. The Nuclear localization signal motif lies at 49-64 (KRGLNSSFETSPKKVK). A phosphoserine mark is found at serine 54, serine 55, serine 59, serine 82, serine 83, and serine 90. Residues 88-101 (TLSSSERSKGSGSR) are compositionally biased toward low complexity. The segment covering 107–149 (SSPQKTRKSPQVTRGSPQKTSCSPQKTRQSPQTLKRSRVTTSL) has biased composition (polar residues). The residue at position 108 (serine 108) is a Phosphoserine; by CDK5. Serine 115 and serine 122 each carry phosphoserine. Residues 166–457 (WKLKSFQTRD…MLRNNLEALL (292 aa)) enclose the Protein kinase domain.

Belongs to the protein kinase superfamily. CK1 Ser/Thr protein kinase family. VRK subfamily. As to quaternary structure, interacts with DUSP3. Interacts with RAN. Interacts with HSP70/HSPA1A. Post-translationally, phosphorylated at Ser-108 by CDK5; leading to protection of the cell against H2O2-induced apoptosis. Ubiquitinated by RNF144A.

Its subcellular location is the nucleus. The protein localises to the cytoplasm. The catalysed reaction is L-seryl-[protein] + ATP = O-phospho-L-seryl-[protein] + ADP + H(+). Plays a role in the regulation of the cell cycle by phosphorylating the nuclear envelope protein barrier-to-autointegration factor/BAF that is required for disassembly and reassembly, respectively, of the nuclear envelope during mitosis. Under normal physiological conditions, negatively regulates ERK activity along with VHR/DUSP3 phosphatase in the nucleus, causing timely and transient action of ERK. Stress conditions activate CDK5 which phosphorylates VRK3 to increase VHR phosphatase activity and suppress prolonged ERK activation that causes cell death. For example, upon glutamate induction, promotes nuclear localization of HSP70/HSPA1A to inhibit ERK activation via VHR/DUSP3 phosphatase. The protein is Serine/threonine-protein kinase VRK3 (VRK3) of Homo sapiens (Human).